The sequence spans 262 residues: Vibriobactin-specific 2,3-dihydro-2,3-dihydroxybenzoate dehydrogenase (262 aa).

12–36 (LLVGSARGIGFSVLEHLLQAGAQVM) contributes to the NAD(+) binding site. Ser-145 contributes to the substrate binding site. Residue Tyr-158 is the Proton acceptor of the active site.

Belongs to the short-chain dehydrogenases/reductases (SDR) family.

It carries out the reaction (2S,3S)-2,3-dihydroxy-2,3-dihydrobenzoate + NAD(+) = 2,3-dihydroxybenzoate + NADH + H(+). The protein operates within siderophore biosynthesis; vibriobactin biosynthesis. In terms of biological role, involved in an early step of the biosynthesis of the catechol siderophore vibriobactin. Vibriobactin is a chelating compound involved in transporting iron from the bacterial environment into the cell cytoplasm. In Vibrio cholerae serotype O1 (strain ATCC 39315 / El Tor Inaba N16961), this protein is Vibriobactin-specific 2,3-dihydro-2,3-dihydroxybenzoate dehydrogenase (vibA).